Reading from the N-terminus, the 304-residue chain is tRNA pseudouridine synthase A (304 aa).

D65 serves as the catalytic Nucleophile. Y123 is a binding site for substrate. The segment at 274 to 304 (HTGQEKPEARLGNGDLESREERPPHEMSPLH) is disordered. Positions 289–298 (LESREERPPH) are enriched in basic and acidic residues.

This sequence belongs to the tRNA pseudouridine synthase TruA family. In terms of assembly, homodimer.

The catalysed reaction is uridine(38/39/40) in tRNA = pseudouridine(38/39/40) in tRNA. In terms of biological role, formation of pseudouridine at positions 38, 39 and 40 in the anticodon stem and loop of transfer RNAs. In Gloeobacter violaceus (strain ATCC 29082 / PCC 7421), this protein is tRNA pseudouridine synthase A.